The following is a 269-amino-acid chain: uncharacterized protein (269 aa).

Positions 3–105 (WIINDNIEFW…VPRRGFKIHN (103 aa)) form a DNA-binding region, ompR/PhoB-type.

The protein to V.cholerae cholera toxin transcriptional activator (ToxR).

This is an uncharacterized protein from Escherichia coli (strain K12).